The primary structure comprises 102 residues: Cuticle protein 10.9 (102 aa).

Position 1 is a pyrrolidone carboxylic acid (glutamine 1). Residues 1-45 form a disordered region; sequence QLAEQYPPHPYSFSYDATDETGARISTSESGDESNSKTGSYSYQT. Residues 8-74 form the Chitin-binding type R&amp;R domain; it reads PHPYSFSYDA…SIDTNEPGTK (67 aa). Positions 36 to 45 are enriched in polar residues; it reads SKTGSYSYQT.

Its function is as follows. Component of the cuticle of the tick. Binds chitin. The chain is Cuticle protein 10.9 from Ixodes ricinus (Common tick).